A 318-amino-acid chain; its full sequence is Methionyl-tRNA formyltransferase (318 aa).

114–117 (SVLP) serves as a coordination point for (6S)-5,6,7,8-tetrahydrofolate.

It belongs to the Fmt family.

It catalyses the reaction L-methionyl-tRNA(fMet) + (6R)-10-formyltetrahydrofolate = N-formyl-L-methionyl-tRNA(fMet) + (6S)-5,6,7,8-tetrahydrofolate + H(+). Functionally, attaches a formyl group to the free amino group of methionyl-tRNA(fMet). The formyl group appears to play a dual role in the initiator identity of N-formylmethionyl-tRNA by promoting its recognition by IF2 and preventing the misappropriation of this tRNA by the elongation apparatus. This chain is Methionyl-tRNA formyltransferase, found in Bdellovibrio bacteriovorus (strain ATCC 15356 / DSM 50701 / NCIMB 9529 / HD100).